A 218-amino-acid chain; its full sequence is Small ribosomal subunit protein uS5 (218 aa).

The span at 1 to 10 (MTQATNQTPG) shows a compositional bias: polar residues. The segment at 1–63 (MTQATNQTPG…GRDERDSEWQ (63 aa)) is disordered. The span at 11-25 (QDVPGAADVPAAAEG) shows a compositional bias: low complexity. A compositionally biased stretch (basic and acidic residues) spans 31-63 (GERRGGGGGRGGDRRGRGDRRGRGRDERDSEWQ). In terms of domain architecture, S5 DRBM spans 62–125 (WQERVIQIRR…ADGKKHLVKV (64 aa)).

This sequence belongs to the universal ribosomal protein uS5 family. Part of the 30S ribosomal subunit. Contacts proteins S4 and S8.

With S4 and S12 plays an important role in translational accuracy. In terms of biological role, located at the back of the 30S subunit body where it stabilizes the conformation of the head with respect to the body. The polypeptide is Small ribosomal subunit protein uS5 (Synechococcus sp. (strain RCC307)).